Consider the following 149-residue polypeptide: D-aminoacyl-tRNA deacylase (149 aa).

Positions 137 to 138 (GP) match the Gly-cisPro motif, important for rejection of L-amino acids motif.

Belongs to the DTD family. As to quaternary structure, homodimer.

It is found in the cytoplasm. It catalyses the reaction glycyl-tRNA(Ala) + H2O = tRNA(Ala) + glycine + H(+). The catalysed reaction is a D-aminoacyl-tRNA + H2O = a tRNA + a D-alpha-amino acid + H(+). Its function is as follows. An aminoacyl-tRNA editing enzyme that deacylates mischarged D-aminoacyl-tRNAs. Also deacylates mischarged glycyl-tRNA(Ala), protecting cells against glycine mischarging by AlaRS. Acts via tRNA-based rather than protein-based catalysis; rejects L-amino acids rather than detecting D-amino acids in the active site. By recycling D-aminoacyl-tRNA to D-amino acids and free tRNA molecules, this enzyme counteracts the toxicity associated with the formation of D-aminoacyl-tRNA entities in vivo and helps enforce protein L-homochirality. This Alkaliphilus metalliredigens (strain QYMF) protein is D-aminoacyl-tRNA deacylase.